Consider the following 464-residue polypeptide: E3 ubiquitin-protein ligase MYLIP-B (464 aa).

The FERM domain maps to 1 to 279 (MLCHITRPDS…EIHAFYRCDT (279 aa)). Residues 381–416 (CALCCEQEISAAFCPCGHMFCCYNCASQLQCCPVCR) form an RING-type zinc finger.

As to quaternary structure, interacts with anxa5.

Its subcellular location is the cytoplasm. The protein resides in the cytosol. The enzyme catalyses S-ubiquitinyl-[E2 ubiquitin-conjugating enzyme]-L-cysteine + [acceptor protein]-L-lysine = [E2 ubiquitin-conjugating enzyme]-L-cysteine + N(6)-ubiquitinyl-[acceptor protein]-L-lysine.. It functions in the pathway protein modification; protein ubiquitination. In terms of biological role, E3 ubiquitin-protein ligase that mediates ubiquitination and subsequent proteasomal degradation of myosin regulatory light chain (MRLC). Regulates cell movements during gastrulation by acting downstream of fz7 to antagonize the frizzled-signaling pathway. In Danio rerio (Zebrafish), this protein is E3 ubiquitin-protein ligase MYLIP-B.